We begin with the raw amino-acid sequence, 425 residues long: Histidine--tRNA ligase 2 (425 aa).

This sequence belongs to the class-II aminoacyl-tRNA synthetase family. In terms of assembly, homodimer.

The protein localises to the cytoplasm. It catalyses the reaction tRNA(His) + L-histidine + ATP = L-histidyl-tRNA(His) + AMP + diphosphate + H(+). The protein is Histidine--tRNA ligase 2 of Shouchella clausii (strain KSM-K16) (Alkalihalobacillus clausii).